A 320-amino-acid polypeptide reads, in one-letter code: Eukaryotic translation initiation factor 3 subunit G (320 aa).

Positions 1-25 (MPTGDFDSKPSWADQVEEEGEDDKC) are disordered. 2 positions are modified to phosphoserine: Ser8 and Ser11. Phosphothreonine is present on residues Thr38 and Thr41. Ser42, Ser189, Ser223, and Ser264 each carry phosphoserine. A disordered region spans residues 209–234 (KTGKYVPPSLRDGASRRGESMQPNRR). Positions 221-234 (GASRRGESMQPNRR) are enriched in basic and acidic residues. The 79-residue stretch at 239–317 (ATIRVTNLSE…LILNVEWAKP (79 aa)) folds into the RRM domain.

Belongs to the eIF-3 subunit G family. In terms of assembly, component of the eukaryotic translation initiation factor 3 (eIF-3) complex, which is composed of 13 subunits: EIF3A, EIF3B, EIF3C, EIF3D, EIF3E, EIF3F, EIF3G, EIF3H, EIF3I, EIF3J, EIF3K, EIF3L and EIF3M. The eIF-3 complex appears to include 3 stable modules: module A is composed of EIF3A, EIF3B, EIF3G and EIF3I; module B is composed of EIF3F, EIF3H, and EIF3M; and module C is composed of EIF3C, EIF3D, EIF3E, EIF3K and EIF3L. EIF3C of module C binds EIF3B of module A and EIF3H of module B, thereby linking the three modules. EIF3J is a labile subunit that binds to the eIF-3 complex via EIF3B. The eIF-3 complex interacts with RPS6KB1 under conditions of nutrient depletion. Mitogenic stimulation leads to binding and activation of a complex composed of FRAP1 and RAPTOR, leading to phosphorylation and release of RPS6KB1 and binding of EIF4B to eIF-3. Interacts (via C-terminus) with AIFM1 (via N-terminus). Interacts with DHX33; the interaction is independent of RNA. Post-translationally, phosphorylated. Phosphorylation is enhanced upon serum stimulation.

It is found in the cytoplasm. The protein resides in the nucleus. Its subcellular location is the perinuclear region. In terms of biological role, RNA-binding component of the eukaryotic translation initiation factor 3 (eIF-3) complex, which is required for several steps in the initiation of protein synthesis. The eIF-3 complex associates with the 40S ribosome and facilitates the recruitment of eIF-1, eIF-1A, eIF-2:GTP:methionyl-tRNAi and eIF-5 to form the 43S pre-initiation complex (43S PIC). The eIF-3 complex stimulates mRNA recruitment to the 43S PIC and scanning of the mRNA for AUG recognition. The eIF-3 complex is also required for disassembly and recycling of post-termination ribosomal complexes and subsequently prevents premature joining of the 40S and 60S ribosomal subunits prior to initiation. The eIF-3 complex specifically targets and initiates translation of a subset of mRNAs involved in cell proliferation, including cell cycling, differentiation and apoptosis, and uses different modes of RNA stem-loop binding to exert either translational activation or repression. This subunit can bind 18S rRNA. This chain is Eukaryotic translation initiation factor 3 subunit G, found in Bos taurus (Bovine).